Here is a 1273-residue protein sequence, read N- to C-terminus: Kinesin-like protein KIN-14A (1273 aa).

Positions Met1–Leu52 are disordered. Residues Ala59–Tyr89 are a coiled coil. The 315-residue stretch at Asn142–Thr456 folds into the Kinesin motor domain. Residue Gly223–Thr230 coordinates ATP. Coiled coils occupy residues Ile466 to Leu511, Gln559 to Ser595, and Thr627 to Glu657. 2 disordered regions span residues Lys827–Val847 and Gln1136–Ser1157. A compositionally biased stretch (low complexity) spans Thr830–Pro846.

The protein belongs to the TRAFAC class myosin-kinesin ATPase superfamily. Kinesin family. KIN-14 subfamily. Homodimer and heterodimer with KCA2. Interacts with CDKA-1. Interacts with AL1, a geminivirus (TGMV) protein essential for viral replication. Interacts with LUE1/KSS. In terms of processing, part of the phosphorylation is not CDK-dependent. Widely expressed.

The protein resides in the nucleus. It is found in the cytoplasm. It localises to the cytoskeleton. The protein localises to the spindle. Its subcellular location is the chromosome. The protein resides in the cell membrane. It is found in the phragmoplast. Its function is as follows. Kinesin-like protein required for chloroplast movements and anchor to the plasma membrane. Mediates chloroplast movement via chloroplast actin (cp-actin) filaments. Required for the chloroplast avoidance response under high intensity blue light. Mediates redundantly with CHUP1 the nuclear avoidance response under high intensity blue light. May act as a mitotic kinesin. Probably involved in division plane determination. The chain is Kinesin-like protein KIN-14A from Arabidopsis thaliana (Mouse-ear cress).